The sequence spans 618 residues: Putative ATP-dependent DNA helicase Q1 (618 aa).

The region spanning Ile-95–Ile-270 is the Helicase ATP-binding domain. Leu-108–Ser-115 is an ATP binding site. The short motif at Asp-214–His-217 is the DEVH box element. Residues Cys-295–Ser-443 form the Helicase C-terminal domain. The Zn(2+) site is built by Cys-448, Cys-466, Cys-470, and Cys-473. The segment at Lys-586 to Leu-618 is disordered. Over residues Ser-603–Leu-618 the composition is skewed to acidic residues.

The protein belongs to the helicase family. RecQ subfamily. It depends on Zn(2+) as a cofactor.

It is found in the nucleus. The enzyme catalyses Couples ATP hydrolysis with the unwinding of duplex DNA by translocating in the 3'-5' direction.. It catalyses the reaction ATP + H2O = ADP + phosphate + H(+). Its function is as follows. DNA helicase that may play a role in the repair of DNA that is damaged by ultraviolet light or other mutagens. Exhibits a magnesium-dependent ATP-dependent DNA-helicase activity that unwinds single- and double-stranded DNA in a 3'-5' direction. The chain is Putative ATP-dependent DNA helicase Q1 from Caenorhabditis briggsae.